The chain runs to 289 residues: Syntaxin-3 (289 aa).

Over Met1–Lys263 the chain is Cytoplasmic. Residues Met32–Ala111 adopt a coiled-coil conformation. A t-SNARE coiled-coil homology domain is found at Leu191–Ala253. Residues Leu264–Leu284 traverse the membrane as a helical; Anchor for type IV membrane protein segment. The Extracellular portion of the chain corresponds to Ser285–Lys289.

The protein belongs to the syntaxin family. In terms of assembly, interacts with REEP6. Interacts with PRPH2 in rod and cone photoreceptors. Interacts with ROM1. Interacts with SNAP25. Interacts with VAMP2. Heart, spleen, lung and kidney.

Its subcellular location is the membrane. In terms of biological role, potentially involved in docking of synaptic vesicles at presynaptic active zones. Apical receptor involved in membrane fusion of apical vesicles. Essential for survival of retinal photoreceetors. The protein is Syntaxin-3 (Stx3) of Rattus norvegicus (Rat).